The primary structure comprises 164 residues: Transcriptional repressor NrdR (164 aa).

Residues 3–34 (CPKCNYHKSSVVDSRQAEDGNTIRRRRECEQC) fold into a zinc finger. Residues 49–139 (LLVIKKDGTR…VYKSFKDVDE (91 aa)) form the ATP-cone domain.

Belongs to the NrdR family. The cofactor is Zn(2+).

Negatively regulates transcription of bacterial ribonucleotide reductase nrd genes and operons by binding to NrdR-boxes. This Streptococcus pyogenes serotype M6 (strain ATCC BAA-946 / MGAS10394) protein is Transcriptional repressor NrdR.